A 432-amino-acid polypeptide reads, in one-letter code: 7-dehydrocholesterol reductase (432 aa).

A run of 9 helical transmembrane segments spans residues 12–34, 64–86, 107–126, 136–155, 195–212, 227–249, 261–283, 287–309, and 371–393; these read YASMLSLLAFCPPFVILLWYTMV, LIAWKIIFCYGAFEAILQLLLPG, LAAYFVTLATYLGLWWFGIF, GEIFSALIFGSFIFCVLLYI, FTNCRFGMMSWAVLAVTY, MLVNTILMLVYVTKFFWWEAGYW, FYICWGCLVWVPSVYTSPGMYLV, VELGTQLAIYILVAGILCIYINY, and SAFFWTVPALFDNFLAYFYVIFL.

It belongs to the ERG4/ERG24 family.

It is found in the endoplasmic reticulum membrane. It catalyses the reaction cholesterol + NADP(+) = 7-dehydrocholesterol + NADPH + H(+). It participates in lipid metabolism; steroid biosynthesis. Its function is as follows. Production of cholesterol by reduction of C7-C8 double bond of 7-dehydrocholesterol (7-DHC). Lesions in the gene coding for the enzyme cause dwarfism. This is 7-dehydrocholesterol reductase (DWF5) from Arabidopsis thaliana (Mouse-ear cress).